The following is a 245-amino-acid chain: Aliphatic sulfonates import ATP-binding protein SsuB 1 (245 aa).

In terms of domain architecture, ABC transporter spans 8-223; the sequence is VSITGLRKSF…ERADPDILRY (216 aa). 40–47 contributes to the ATP binding site; sequence GPSGTGKT.

The protein belongs to the ABC transporter superfamily. Aliphatic sulfonates importer (TC 3.A.1.17.2) family. The complex is composed of two ATP-binding proteins (SsuB), two transmembrane proteins (SsuC) and a solute-binding protein (SsuA).

Its subcellular location is the cell membrane. It catalyses the reaction ATP + H2O + aliphatic sulfonate-[sulfonate-binding protein]Side 1 = ADP + phosphate + aliphatic sulfonateSide 2 + [sulfonate-binding protein]Side 1.. Functionally, part of the ABC transporter complex SsuABC involved in aliphatic sulfonates import. Responsible for energy coupling to the transport system. The sequence is that of Aliphatic sulfonates import ATP-binding protein SsuB 1 from Nocardia farcinica (strain IFM 10152).